A 498-amino-acid polypeptide reads, in one-letter code: Guanosine-5'-triphosphate,3'-diphosphate pyrophosphatase (498 aa).

The protein belongs to the GppA/Ppx family. GppA subfamily.

The enzyme catalyses guanosine 3'-diphosphate 5'-triphosphate + H2O = guanosine 3',5'-bis(diphosphate) + phosphate + H(+). The protein operates within purine metabolism; ppGpp biosynthesis; ppGpp from GTP: step 2/2. Functionally, catalyzes the conversion of pppGpp to ppGpp. Guanosine pentaphosphate (pppGpp) is a cytoplasmic signaling molecule which together with ppGpp controls the 'stringent response', an adaptive process that allows bacteria to respond to amino acid starvation, resulting in the coordinated regulation of numerous cellular activities. This is Guanosine-5'-triphosphate,3'-diphosphate pyrophosphatase from Pectobacterium atrosepticum (strain SCRI 1043 / ATCC BAA-672) (Erwinia carotovora subsp. atroseptica).